The primary structure comprises 355 residues: Peptide chain release factor 1 (355 aa).

Gln-231 carries the N5-methylglutamine modification. Basic and acidic residues predominate over residues 280–293; sequence KERKAKEQSERKDQ. The interval 280–307 is disordered; the sequence is KERKAKEQSERKDQVGTGDRSGRIRTYN.

Belongs to the prokaryotic/mitochondrial release factor family. Methylated by PrmC. Methylation increases the termination efficiency of RF1.

Its subcellular location is the cytoplasm. Functionally, peptide chain release factor 1 directs the termination of translation in response to the peptide chain termination codons UAG and UAA. The polypeptide is Peptide chain release factor 1 (Campylobacter hominis (strain ATCC BAA-381 / DSM 21671 / CCUG 45161 / LMG 19568 / NCTC 13146 / CH001A)).